Reading from the N-terminus, the 274-residue chain is Dermonecrotic toxin SdSicTox-betaIIB1bx (274 aa).

The active site involves H5. Positions 25 and 27 each coordinate Mg(2+). H41 functions as the Nucleophile in the catalytic mechanism. Cystine bridges form between C45–C51 and C47–C190. Position 85 (D85) interacts with Mg(2+).

This sequence belongs to the arthropod phospholipase D family. Class II subfamily. Mg(2+) is required as a cofactor. In terms of tissue distribution, expressed by the venom gland.

The protein resides in the secreted. The enzyme catalyses an N-(acyl)-sphingosylphosphocholine = an N-(acyl)-sphingosyl-1,3-cyclic phosphate + choline. It catalyses the reaction an N-(acyl)-sphingosylphosphoethanolamine = an N-(acyl)-sphingosyl-1,3-cyclic phosphate + ethanolamine. It carries out the reaction a 1-acyl-sn-glycero-3-phosphocholine = a 1-acyl-sn-glycero-2,3-cyclic phosphate + choline. The catalysed reaction is a 1-acyl-sn-glycero-3-phosphoethanolamine = a 1-acyl-sn-glycero-2,3-cyclic phosphate + ethanolamine. In terms of biological role, dermonecrotic toxins cleave the phosphodiester linkage between the phosphate and headgroup of certain phospholipids (sphingolipid and lysolipid substrates), forming an alcohol (often choline) and a cyclic phosphate. This toxin acts on sphingomyelin (SM). It may also act on ceramide phosphoethanolamine (CPE), lysophosphatidylcholine (LPC) and lysophosphatidylethanolamine (LPE), but not on lysophosphatidylserine (LPS), and lysophosphatidylglycerol (LPG). It acts by transphosphatidylation, releasing exclusively cyclic phosphate products as second products. Induces dermonecrosis, hemolysis, increased vascular permeability, edema, inflammatory response, and platelet aggregation. This is Dermonecrotic toxin SdSicTox-betaIIB1bx from Sicarius cf. damarensis (strain GJB-2008) (Six-eyed sand spider).